The primary structure comprises 88 residues: Elongation factor 1-beta (88 aa).

Belongs to the EF-1-beta/EF-1-delta family.

Its function is as follows. Promotes the exchange of GDP for GTP in EF-1-alpha/GDP, thus allowing the regeneration of EF-1-alpha/GTP that could then be used to form the ternary complex EF-1-alpha/GTP/AAtRNA. In Halobacterium salinarum (strain ATCC 29341 / DSM 671 / R1), this protein is Elongation factor 1-beta.